The sequence spans 375 residues: MVEIGMGRTARRTYELSEISIVPSRRTRSSKDVSTAWQLDAYRFEIPVVAHPTDALVSPEFAIELGRLGGLGVLNGEGLIGRHLDVEAKIAQLLEAAAADPEPSTAIRLLQELHAAPLNPDLLGAAVARIREAGVTTAVRVSPQNAQWLTPVLVAAGIDLLVIQGTIVSAERVASDGEPLNLKTFISELDIPVVAGGVLDHRTALHLMRTGAAGVIVGYGSTQGVTTTDEVLGISVPMATAIADAAAARRDYLDETGGRYVHVLADGDIHTSGELAKAIACGADAVVLGTPLAESAEALGEGWFWPAAAAHPSLPRGALLQIAVGERPPLARVLGGPSDDPFGGLNLVGGLRRSMAKAGYCDLKEFQKVGLTVGG.

Belongs to the IMPDH/GMPR family.

This is an uncharacterized protein from Mycobacterium tuberculosis (strain CDC 1551 / Oshkosh).